A 163-amino-acid polypeptide reads, in one-letter code: Periplasmic nitrate reductase, electron transfer subunit (163 aa).

Positions 1–32 are cleaved as a signal peptide; that stretch reads MRSQDPSRRLSRRLWTLFALALCLVTGTVALA. Positions 76, 90, 93, 94, 111, 130, 133, and 134 each coordinate heme c.

The protein belongs to the NapB family. In terms of assembly, component of the periplasmic nitrate reductase NapAB complex composed of NapA and NapB. In terms of processing, binds 2 heme C groups per subunit.

Its subcellular location is the periplasm. Electron transfer subunit of the periplasmic nitrate reductase complex NapAB. Receives electrons from the membrane-anchored tetraheme c-type NapC protein and transfers these to NapA subunit, thus allowing electron flow between membrane and periplasm. Essential for periplasmic nitrate reduction with nitrate as the terminal electron acceptor. In Neorhizobium galegae (Rhizobium galegae), this protein is Periplasmic nitrate reductase, electron transfer subunit.